The primary structure comprises 148 residues: Cystatin-C (148 aa).

Residues 1-28 (MARSLGVPLLLLAALVVALALAVSPAAG) form the signal peptide. A Secondary area of contact motif is present at residues 83–87 (QIVSG). Disulfide bonds link cysteine 101–cysteine 111 and cysteine 125–cysteine 145.

Belongs to the cystatin family.

The protein resides in the secreted. Functionally, this is a thiol proteinase inhibitor. The protein is Cystatin-C (CST3) of Oryctolagus cuniculus (Rabbit).